Reading from the N-terminus, the 378-residue chain is MSDTDNSAEMPARCPSPNPAPGAKQEPPNSGITISLLEIGSLPTVCYHSFPPPKNSICPVEKRGRVQKFSNLLKDVKDVLKNIAGVEEKSTVGEPFDDAYIPEDLSELNVRGVEKKNKIRFKDDLFIHFDPEREQNTMKQMLLKNQSAKNMVPKFARDLCNAEETRGFDGMLLSVKRPRNGSLHLRGEYRKLRNNMEQLLQEADHWSKQHNELSELMRSYQECQNETQETTDKDRACLQNQPNNGLSTKQKLEEQVKKLSHDTHALHLIAALLENECQVLQQRVDILKDFHLHEAGLGHEKPLQMSCEQDKKCPKLAEADKTDAFKHTTRATEGTIRKPKILRSPDVCFTKKARNNRFNARVAKKSLVGKRRTVSSFR.

Residues 1–31 (MSDTDNSAEMPARCPSPNPAPGAKQEPPNSG) form a disordered region. Position 106 is a phosphoserine (Ser-106). The interval 116–122 (KNKIRFK) is interaction with PPP1CC isoform gamma-2. The tract at residues 116–127 (KNKIRFKDDLFI) is helix-loop-helix motif. Residues 128–193 (HFDPEREQNT…HLRGEYRKLR (66 aa)) are basic motif. Positions 182 to 233 (SLHLRGEYRKLRNNMEQLLQEADHWSKQHNELSELMRSYQECQNETQETTDK) form a coiled coil. Position 207 is a phosphoserine (Ser-207). Residues 252–273 (LEEQVKKLSHDTHALHLIAALL) are leucine-zipper.

As to quaternary structure, interacts with PPP1CC isoform gamma-2. This interaction can prevent SPZ1 binding to the E-box and inhibits PPP1CC activity. Phosphorylated by MAPK1/ERK2 and MAPK3/ERK1. Expressed specifically in the testis and epidydimis. In the testis expressed in both germ cells and somatic cells (Sertoli and Leydig cells). Expressed in several tumor cell lines.

The protein localises to the cytoplasm. It localises to the nucleus. In terms of biological role, transcription factor that binds to the DNA sequence 5'-CANNTG-3'(E box) and the G-box motif. Directly binds to a guanine-rich region of the PCNA promoter and up-regulates its expression which in turn induces cell transformation and tumor formation. May play an important role in the regulation of cell proliferation and differentiation during spermatogenesis. This is Spermatogenic leucine zipper protein 1 (Spz1) from Mus musculus (Mouse).